The primary structure comprises 493 residues: Voltage-gated potassium channel regulatory subunit KCNF1 (493 aa).

The Cytoplasmic segment spans residues 1–183; that stretch reads MDASAEQSLP…KPESSCPARV (183 aa). The helical transmembrane segment at 184–204 threads the bilayer; it reads VAVLSFLLILVSSVVMCMGTI. The Extracellular portion of the chain corresponds to 205 to 223; sequence PELQVVDSEGNRVEHPTLE. The helical transmembrane segment at 224 to 244 threads the bilayer; sequence NVETACIGWFTLEYLLRLFSS. The Cytoplasmic segment spans residues 245–249; that stretch reads PNKLH. A helical transmembrane segment spans residues 250 to 270; it reads FALSFMNIVDVLAILPFYVSL. Topologically, residues 271 to 289 are extracellular; that stretch reads TLTHLGARMMELTNVQQAV. A helical; Voltage-sensor membrane pass occupies residues 290–310; sequence QALRIMRIARIFKLARHSSGL. Over 311-324 the chain is Cytoplasmic; sequence QTLTYALKRSFKEL. A helical transmembrane segment spans residues 325-345; it reads GLLLMYLAVGIFVFSALGYTM. Over 346–357 the chain is Extracellular; it reads EQSHPETLFKSI. Residues 358–378 constitute an intramembrane region (pore-forming); sequence PQSFWWAIITMTTVGYGDIYP. Residues 370–375 carry the Selectivity filter motif; that stretch reads TVGYGD. The Extracellular portion of the chain corresponds to 379–385; the sequence is KTTLGKL. A helical membrane pass occupies residues 386-406; the sequence is NAAISFLCGVIAIALPIHPII. At 407–493 the chain is on the cytoplasmic side; that stretch reads NNFVRYYNKQ…HHRTRLQSCK (87 aa). The disordered stretch occupies residues 433-468; sequence NSSSAESKPGGSRSDLDTLPPEPAAREGPSWGSRLK.

The protein belongs to the potassium channel family. F (TC 1.A.1.2) subfamily. Kv5.1/KCNF1 sub-subfamily. Heterotetramer with KCNB1 or KCNB2. In terms of tissue distribution, expressed in brain namely in the piriform cortex, olfactory tubercle, and medial habenular nucleus. Also expressed in the medial amygdaloid nuclei and the lateral amygdaloid area.

It localises to the cell membrane. Functionally, regulatory alpha-subunit of the voltage-gated potassium (Kv) channel which, when coassembled with KCNB1 or KCNB2, can modulate their expression and their gating kinetics by acting on deactivation upon repolarization and inactivation during maintained depolarization. Accelerates inactivation but has relatively little effect on deactivation. Coexpression with KCNB1 or KCNB2 markedly slows inactivation. Each modulatory subunit has its own specific properties of regulation, and can lead to extensive inhibitions, to large changes in kinetics, and/or to large shifts in the voltage dependencies of the inactivation process. The gating kinetics depends on the nature and stoichiometry of the associated regulatory sunbunit. Fails to produce a potassium current when expressed alone. In Rattus norvegicus (Rat), this protein is Voltage-gated potassium channel regulatory subunit KCNF1.